The following is a 306-amino-acid chain: Curved DNA-binding protein (306 aa).

The J domain maps to aspartate 5–tryptophan 69.

The protein resides in the cytoplasm. Its subcellular location is the nucleoid. DNA-binding protein that preferentially recognizes a curved DNA sequence. It is probably a functional analog of DnaJ; displays overlapping activities with DnaJ, but functions under different conditions, probably acting as a molecular chaperone in an adaptive response to environmental stresses other than heat shock. Lacks autonomous chaperone activity; binds native substrates and targets them for recognition by DnaK. Its activity is inhibited by the binding of CbpM. This Shigella flexneri protein is Curved DNA-binding protein.